Consider the following 573-residue polypeptide: Delta 8-(E)-sphingolipid desaturase (573 aa).

In terms of domain architecture, Cytochrome b5 heme-binding spans 2–77 (SRVLSRRDIA…FKIWKIGRID (76 aa)). The heme site is built by H37 and H60. A helical transmembrane segment spans residues 228-248 (LFGISFYLLSLKWFAISAICL). A Histidine box-1 motif is present at residues 260 to 264 (HDAGH). The chain crosses the membrane as a helical span at residues 273 to 293 (VDNIIGMTVASWIGGLSLGWW). The short motif at 297 to 301 (HNVHH) is the Histidine box-2 element. 3 helical membrane passes run 353-372 (YLYY…LSWM), 393-413 (LAGL…KQMP), and 422-442 (VMIS…SHFA). The Histidine box-3 signature appears at 481–485 (QVIHH).

The protein belongs to the fatty acid desaturase type 1 family.

It localises to the membrane. The catalysed reaction is an N-acylsphing-4-enine + 2 Fe(II)-[cytochrome b5] + O2 + 2 H(+) = a (4E,8E)-4-sphinga-4,8-dienine ceramide + 2 Fe(III)-[cytochrome b5] + 2 H2O. Its pathway is lipid metabolism; sphingolipid metabolism. Delta(8)-fatty-acid desaturase which introduces a double bond at the 8-position in the long-chain base (LCB) of ceramides. Required for the formation of the di-unsaturated sphingoid base (E,E)-sphinga-4,8-dienine during glucosylceramide (GluCer) biosynthesis. The polypeptide is Delta 8-(E)-sphingolipid desaturase (Kluyveromyces lactis (strain ATCC 8585 / CBS 2359 / DSM 70799 / NBRC 1267 / NRRL Y-1140 / WM37) (Yeast)).